Reading from the N-terminus, the 162-residue chain is Regulatory protein RecX (162 aa).

The protein belongs to the RecX family.

It localises to the cytoplasm. Modulates RecA activity. This is Regulatory protein RecX from Xanthomonas oryzae pv. oryzae (strain PXO99A).